The sequence spans 378 residues: Phosphoserine aminotransferase (378 aa).

Position 53 (R53) interacts with L-glutamate. W117, T167, D190, and Q213 together coordinate pyridoxal 5'-phosphate. K214 is modified (N6-(pyridoxal phosphate)lysine). Pyridoxal 5'-phosphate is bound at residue 255–256; sequence NT.

The protein belongs to the class-V pyridoxal-phosphate-dependent aminotransferase family. SerC subfamily. In terms of assembly, homodimer. The cofactor is pyridoxal 5'-phosphate.

It localises to the cytoplasm. The catalysed reaction is O-phospho-L-serine + 2-oxoglutarate = 3-phosphooxypyruvate + L-glutamate. It carries out the reaction 4-(phosphooxy)-L-threonine + 2-oxoglutarate = (R)-3-hydroxy-2-oxo-4-phosphooxybutanoate + L-glutamate. It functions in the pathway amino-acid biosynthesis; L-serine biosynthesis; L-serine from 3-phospho-D-glycerate: step 2/3. The protein operates within cofactor biosynthesis; pyridoxine 5'-phosphate biosynthesis; pyridoxine 5'-phosphate from D-erythrose 4-phosphate: step 3/5. Catalyzes the reversible conversion of 3-phosphohydroxypyruvate to phosphoserine and of 3-hydroxy-2-oxo-4-phosphonooxybutanoate to phosphohydroxythreonine. This Ralstonia pickettii (strain 12J) protein is Phosphoserine aminotransferase.